A 510-amino-acid chain; its full sequence is 2,3-bisphosphoglycerate-independent phosphoglycerate mutase (510 aa).

Mn(2+)-binding residues include D14 and S64. S64 acts as the Phosphoserine intermediate in catalysis. Substrate-binding positions include H125, 155–156, R187, R193, 259–262, and K332; these read RD and RADR. Positions 399, 403, 440, 441, and 459 each coordinate Mn(2+).

It belongs to the BPG-independent phosphoglycerate mutase family. In terms of assembly, monomer. Mn(2+) serves as cofactor.

It carries out the reaction (2R)-2-phosphoglycerate = (2R)-3-phosphoglycerate. The protein operates within carbohydrate degradation; glycolysis; pyruvate from D-glyceraldehyde 3-phosphate: step 3/5. Catalyzes the interconversion of 2-phosphoglycerate and 3-phosphoglycerate. This Pseudomonas syringae pv. syringae (strain B728a) protein is 2,3-bisphosphoglycerate-independent phosphoglycerate mutase.